We begin with the raw amino-acid sequence, 1449 residues long: Gag-Pol polyprotein (1449 aa).

Glycine 2 is lipidated: N-myristoyl glycine; by host. The segment at 7–31 (VLTGGKLDQWESIYLRPGGKKKYRM) is interaction with Gp41. Residues 8-43 (LTGGKLDQWESIYLRPGGKKKYRMKHLVWASRELER) are interaction with host CALM1. The segment at 12–19 (KLDQWESI) is interaction with host AP3D1. Residues 14-33 (DQWESIYLRPGGKKKYRMKH) form an interaction with membrane phosphatidylinositol 4,5-bisphosphate and RNA region. A Nuclear export signal motif is present at residues 16–22 (WESIYLR). The Nuclear localization signal motif lies at 26–32 (KKKYRMK). An interaction with membrane phosphatidylinositol 4,5-bisphosphate region spans residues 73–77 (EELRS). Tyrosine 134 carries the phosphotyrosine; by host modification. Positions 191 to 229 (NTVGGHQAAMQMLKEVINEEAADWDRTHPVPVGPLPPGQ) are interaction with human PPIA/CYPA and NUP153. Positions 279-365 (YSPVSILEIK…GGPAHKARVL (87 aa)) are dimerization/Multimerization of capsid protein p24. 2 CCHC-type zinc fingers span residues 393 to 410 (IKCFNCGKEGHLARNCKA) and 414 to 431 (GGCWKCGQEGHQMKDCKN). The segment covering 447-461 (ETRKLPPDNNKERAH) has biased composition (basic and acidic residues). Positions 447–489 (ETRKLPPDNNKERAHSPATRELWVSGGEEHTGEGDAGEPGEDR) are disordered. The interval 499–503 (PQITL) is dimerization of protease. Residues 518 to 587 (REALLDTGAD…TPVNIIGRNL (70 aa)) enclose the Peptidase A2 domain. Aspartate 523 acts as the For protease activity; shared with dimeric partner in catalysis. Dimerization of protease regions lie at residues 547-553 (GIGGFIK) and 586-598 (NLLTQIGCTLNFP). The region spanning 641 to 831 (EGKISRIGPE…PPFLWMGYEL (191 aa)) is the Reverse transcriptase domain. Mg(2+) is bound by residues aspartate 707, aspartate 782, and aspartate 783. An RT 'primer grip' region spans residues 824–832 (FLWMGYELH). The short motif at 995–1011 (WEAWWTDHWQATWIPEW) is the Tryptophan repeat motif element. The 124-residue stretch at 1031–1154 (ISGAETFYVD…VDKLVSSGIR (124 aa)) folds into the RNase H type-1 domain. Mg(2+)-binding residues include aspartate 1040, glutamate 1075, aspartate 1095, and aspartate 1146. The segment at 1160–1201 (DGIEKAQEDHDRYHSNWKAMASDFNLPPIVAKEIVASCDKCQ) adopts an Integrase-type zinc-finger fold. Zn(2+)-binding residues include histidine 1169, histidine 1173, cysteine 1197, and cysteine 1200. An Integrase catalytic domain is found at 1211–1361 (VNCSPGVWQL…TAGERIIDII (151 aa)). Mg(2+) contacts are provided by aspartate 1221, aspartate 1273, and glutamate 1309. The integrase-type DNA-binding region spans 1380 to 1427 (FRVYYRDSRDPIWKGPAKLLWKGEGAVVIQDNGDIKVVPRRKAKIIRD).

Homotrimer; further assembles as hexamers of trimers. Interacts with gp41 (via C-terminus). Interacts with host CALM1; this interaction induces a conformational change in the Matrix protein, triggering exposure of the myristate group. Interacts with host AP3D1; this interaction allows the polyprotein trafficking to multivesicular bodies during virus assembly. Part of the pre-integration complex (PIC) which is composed of viral genome, matrix protein, Vpr and integrase. In terms of assembly, homodimer; the homodimer further multimerizes as homohexamers or homopentamers. Interacts with human PPIA/CYPA; This interaction stabilizes the capsid. Interacts with human NUP153. Interacts with host PDZD8; this interaction stabilizes the capsid. Interacts with monkey TRIM5; this interaction destabilizes the capsid. As to quaternary structure, homodimer, whose active site consists of two apposed aspartic acid residues. Heterodimer of p66 RT and p51 RT (RT p66/p51). Heterodimerization of RT is essential for DNA polymerase activity. The overall folding of the subdomains is similar in p66 RT and p51 RT but the spatial arrangements of the subdomains are dramatically different. In terms of assembly, homotetramer; may further associate as a homohexadecamer. Part of the pre-integration complex (PIC) which is composed of viral genome, matrix protein, Vpr and integrase. Interacts with human SMARCB1/INI1 and human PSIP1/LEDGF isoform 1. Interacts with human KPNA3; this interaction might play a role in nuclear import of the pre-integration complex. Interacts with human NUP153; this interaction might play a role in nuclear import of the pre-integration complex. Mg(2+) serves as cofactor. Post-translationally, specific enzymatic cleavages by the viral protease yield mature proteins. The protease is released by autocatalytic cleavage. The polyprotein is cleaved during and after budding, this process is termed maturation. Proteolytic cleavage of p66 RT removes the RNase H domain to yield the p51 RT subunit. Nucleocapsid protein p7 might be further cleaved after virus entry. In terms of processing, tyrosine phosphorylated presumably in the virion by a host kinase. Phosphorylation is apparently not a major regulator of membrane association. Phosphorylated possibly by host MAPK1; this phosphorylation is necessary for Pin1-mediated virion uncoating. Post-translationally, methylated by host PRMT6, impairing its function by reducing RNA annealing and the initiation of reverse transcription.

Its subcellular location is the host cell membrane. The protein localises to the host endosome. It localises to the host multivesicular body. The protein resides in the virion membrane. It is found in the host nucleus. Its subcellular location is the host cytoplasm. The protein localises to the virion. The catalysed reaction is Specific for a P1 residue that is hydrophobic, and P1' variable, but often Pro.. It carries out the reaction Endohydrolysis of RNA in RNA/DNA hybrids. Three different cleavage modes: 1. sequence-specific internal cleavage of RNA. Human immunodeficiency virus type 1 and Moloney murine leukemia virus enzymes prefer to cleave the RNA strand one nucleotide away from the RNA-DNA junction. 2. RNA 5'-end directed cleavage 13-19 nucleotides from the RNA end. 3. DNA 3'-end directed cleavage 15-20 nucleotides away from the primer terminus.. The enzyme catalyses 3'-end directed exonucleolytic cleavage of viral RNA-DNA hybrid.. It catalyses the reaction DNA(n) + a 2'-deoxyribonucleoside 5'-triphosphate = DNA(n+1) + diphosphate. Protease: The viral protease is inhibited by many synthetic protease inhibitors (PIs), such as amprenavir, atazanavir, indinavir, loprinavir, nelfinavir, ritonavir and saquinavir. Use of protease inhibitors in tritherapy regimens permit more ambitious therapeutic strategies. Reverse transcriptase/ribonuclease H: RT can be inhibited either by nucleoside RT inhibitors (NRTIs) or by non nucleoside RT inhibitors (NNRTIs). NRTIs act as chain terminators, whereas NNRTIs inhibit DNA polymerization by binding a small hydrophobic pocket near the RT active site and inducing an allosteric change in this region. Classical NRTIs are abacavir, adefovir (PMEA), didanosine (ddI), lamivudine (3TC), stavudine (d4T), tenofovir (PMPA), zalcitabine (ddC), and zidovudine (AZT). Classical NNRTIs are atevirdine (BHAP U-87201E), delavirdine, efavirenz (DMP-266), emivirine (I-EBU), and nevirapine (BI-RG-587). The tritherapies used as a basic effective treatment of AIDS associate two NRTIs and one NNRTI. Mediates, with Gag polyprotein, the essential events in virion assembly, including binding the plasma membrane, making the protein-protein interactions necessary to create spherical particles, recruiting the viral Env proteins, and packaging the genomic RNA via direct interactions with the RNA packaging sequence (Psi). Gag-Pol polyprotein may regulate its own translation, by the binding genomic RNA in the 5'-UTR. At low concentration, the polyprotein would promote translation, whereas at high concentration, the polyprotein would encapsidate genomic RNA and then shut off translation. Functionally, targets the polyprotein to the plasma membrane via a multipartite membrane-binding signal, that includes its myristoylated N-terminus. Matrix protein is part of the pre-integration complex. Implicated in the release from host cell mediated by Vpu. Binds to RNA. Its function is as follows. Forms the conical core that encapsulates the genomic RNA-nucleocapsid complex in the virion. Most core are conical, with only 7% tubular. The core is constituted by capsid protein hexamer subunits. The core is disassembled soon after virion entry. Host restriction factors such as TRIM5-alpha or TRIMCyp bind retroviral capsids and cause premature capsid disassembly, leading to blocks in reverse transcription. Capsid restriction by TRIM5 is one of the factors which restricts HIV-1 to the human species. Host PIN1 apparently facilitates the virion uncoating. On the other hand, interactions with PDZD8 or CYPA stabilize the capsid. In terms of biological role, encapsulates and protects viral dimeric unspliced genomic RNA (gRNA). Binds these RNAs through its zinc fingers. Acts as a nucleic acid chaperone which is involved in rearangement of nucleic acid secondary structure during gRNA retrotranscription. Also facilitates template switch leading to recombination. As part of the polyprotein, participates in gRNA dimerization, packaging, tRNA incorporation and virion assembly. Aspartyl protease that mediates proteolytic cleavages of Gag and Gag-Pol polyproteins during or shortly after the release of the virion from the plasma membrane. Cleavages take place as an ordered, step-wise cascade to yield mature proteins. This process is called maturation. Displays maximal activity during the budding process just prior to particle release from the cell. Also cleaves Nef and Vif, probably concomitantly with viral structural proteins on maturation of virus particles. Hydrolyzes host EIF4GI and PABP1 in order to shut off the capped cellular mRNA translation. The resulting inhibition of cellular protein synthesis serves to ensure maximal viral gene expression and to evade host immune response. Also mediates cleavage of host YTHDF3. Mediates cleavage of host CARD8, thereby activating the CARD8 inflammasome, leading to the clearance of latent HIV-1 in patient CD4(+) T-cells after viral reactivation; in contrast, HIV-1 can evade CARD8-sensing when its protease remains inactive in infected cells prior to viral budding. Functionally, multifunctional enzyme that converts the viral RNA genome into dsDNA in the cytoplasm, shortly after virus entry into the cell. This enzyme displays a DNA polymerase activity that can copy either DNA or RNA templates, and a ribonuclease H (RNase H) activity that cleaves the RNA strand of RNA-DNA heteroduplexes in a partially processive 3' to 5' endonucleasic mode. Conversion of viral genomic RNA into dsDNA requires many steps. A tRNA(3)-Lys binds to the primer-binding site (PBS) situated at the 5'-end of the viral RNA. RT uses the 3' end of the tRNA primer to perform a short round of RNA-dependent minus-strand DNA synthesis. The reading proceeds through the U5 region and ends after the repeated (R) region which is present at both ends of viral RNA. The portion of the RNA-DNA heteroduplex is digested by the RNase H, resulting in a ssDNA product attached to the tRNA primer. This ssDNA/tRNA hybridizes with the identical R region situated at the 3' end of viral RNA. This template exchange, known as minus-strand DNA strong stop transfer, can be either intra- or intermolecular. RT uses the 3' end of this newly synthesized short ssDNA to perform the RNA-dependent minus-strand DNA synthesis of the whole template. RNase H digests the RNA template except for two polypurine tracts (PPTs) situated at the 5'-end and near the center of the genome. It is not clear if both polymerase and RNase H activities are simultaneous. RNase H probably can proceed both in a polymerase-dependent (RNA cut into small fragments by the same RT performing DNA synthesis) and a polymerase-independent mode (cleavage of remaining RNA fragments by free RTs). Secondly, RT performs DNA-directed plus-strand DNA synthesis using the PPTs that have not been removed by RNase H as primers. PPTs and tRNA primers are then removed by RNase H. The 3' and 5' ssDNA PBS regions hybridize to form a circular dsDNA intermediate. Strand displacement synthesis by RT to the PBS and PPT ends produces a blunt ended, linear dsDNA copy of the viral genome that includes long terminal repeats (LTRs) at both ends. Its function is as follows. Catalyzes viral DNA integration into the host chromosome, by performing a series of DNA cutting and joining reactions. This enzyme activity takes place after virion entry into a cell and reverse transcription of the RNA genome in dsDNA. The first step in the integration process is 3' processing. This step requires a complex comprising the viral genome, matrix protein, Vpr and integrase. This complex is called the pre-integration complex (PIC). The integrase protein removes 2 nucleotides from each 3' end of the viral DNA, leaving recessed CA OH's at the 3' ends. In the second step, the PIC enters cell nucleus. This process is mediated through integrase and Vpr proteins, and allows the virus to infect a non dividing cell. This ability to enter the nucleus is specific of lentiviruses, other retroviruses cannot and rely on cell division to access cell chromosomes. In the third step, termed strand transfer, the integrase protein joins the previously processed 3' ends to the 5' ends of strands of target cellular DNA at the site of integration. The 5'-ends are produced by integrase-catalyzed staggered cuts, 5 bp apart. A Y-shaped, gapped, recombination intermediate results, with the 5'-ends of the viral DNA strands and the 3' ends of target DNA strands remaining unjoined, flanking a gap of 5 bp. The last step is viral DNA integration into host chromosome. This involves host DNA repair synthesis in which the 5 bp gaps between the unjoined strands are filled in and then ligated. Since this process occurs at both cuts flanking the HIV genome, a 5 bp duplication of host DNA is produced at the ends of HIV-1 integration. Alternatively, Integrase may catalyze the excision of viral DNA just after strand transfer, this is termed disintegration. The chain is Gag-Pol polyprotein (gag-pol) from Human immunodeficiency virus type 1 group N (isolate YBF30) (HIV-1).